A 207-amino-acid polypeptide reads, in one-letter code: ATP-dependent Clp protease proteolytic subunit (207 aa).

The Nucleophile role is filled by Ser111. His136 is a catalytic residue.

This sequence belongs to the peptidase S14 family. As to quaternary structure, fourteen ClpP subunits assemble into 2 heptameric rings which stack back to back to give a disk-like structure with a central cavity, resembling the structure of eukaryotic proteasomes.

It is found in the cytoplasm. It catalyses the reaction Hydrolysis of proteins to small peptides in the presence of ATP and magnesium. alpha-casein is the usual test substrate. In the absence of ATP, only oligopeptides shorter than five residues are hydrolyzed (such as succinyl-Leu-Tyr-|-NHMec, and Leu-Tyr-Leu-|-Tyr-Trp, in which cleavage of the -Tyr-|-Leu- and -Tyr-|-Trp bonds also occurs).. Functionally, cleaves peptides in various proteins in a process that requires ATP hydrolysis. Has a chymotrypsin-like activity. Plays a major role in the degradation of misfolded proteins. The polypeptide is ATP-dependent Clp protease proteolytic subunit (Proteus mirabilis (strain HI4320)).